The chain runs to 270 residues: Ribosomal RNA small subunit methyltransferase A (270 aa).

Residues asparagine 15, isoleucine 17, glycine 42, glutamate 64, aspartate 89, and asparagine 108 each coordinate S-adenosyl-L-methionine.

The protein belongs to the class I-like SAM-binding methyltransferase superfamily. rRNA adenine N(6)-methyltransferase family. RsmA subfamily.

It localises to the cytoplasm. The enzyme catalyses adenosine(1518)/adenosine(1519) in 16S rRNA + 4 S-adenosyl-L-methionine = N(6)-dimethyladenosine(1518)/N(6)-dimethyladenosine(1519) in 16S rRNA + 4 S-adenosyl-L-homocysteine + 4 H(+). In terms of biological role, specifically dimethylates two adjacent adenosines (A1518 and A1519) in the loop of a conserved hairpin near the 3'-end of 16S rRNA in the 30S particle. May play a critical role in biogenesis of 30S subunits. This chain is Ribosomal RNA small subunit methyltransferase A, found in Anaplasma marginale (strain Florida).